A 491-amino-acid polypeptide reads, in one-letter code: Ketol-acid reductoisomerase (NADP(+)) (491 aa).

Residues 15–208 (AQLGKCRFMG…GGHRAGVLES (194 aa)) enclose the KARI N-terminal Rossmann domain. Residues 45–48 (CGAQ), arginine 68, arginine 76, serine 78, and 108–110 (DKQ) contribute to the NADP(+) site. Histidine 132 is a catalytic residue. Glycine 158 is a binding site for NADP(+). KARI C-terminal knotted domains are found at residues 209 to 344 (SFVA…TAPQ) and 345 to 484 (YEGK…MTDM). The Mg(2+) site is built by aspartate 217, glutamate 221, glutamate 389, and glutamate 393. A substrate-binding site is contributed by serine 414.

This sequence belongs to the ketol-acid reductoisomerase family. It depends on Mg(2+) as a cofactor.

The enzyme catalyses (2R)-2,3-dihydroxy-3-methylbutanoate + NADP(+) = (2S)-2-acetolactate + NADPH + H(+). The catalysed reaction is (2R,3R)-2,3-dihydroxy-3-methylpentanoate + NADP(+) = (S)-2-ethyl-2-hydroxy-3-oxobutanoate + NADPH + H(+). It functions in the pathway amino-acid biosynthesis; L-isoleucine biosynthesis; L-isoleucine from 2-oxobutanoate: step 2/4. It participates in amino-acid biosynthesis; L-valine biosynthesis; L-valine from pyruvate: step 2/4. Its function is as follows. Involved in the biosynthesis of branched-chain amino acids (BCAA). Catalyzes an alkyl-migration followed by a ketol-acid reduction of (S)-2-acetolactate (S2AL) to yield (R)-2,3-dihydroxy-isovalerate. In the isomerase reaction, S2AL is rearranged via a Mg-dependent methyl migration to produce 3-hydroxy-3-methyl-2-ketobutyrate (HMKB). In the reductase reaction, this 2-ketoacid undergoes a metal-dependent reduction by NADPH to yield (R)-2,3-dihydroxy-isovalerate. The sequence is that of Ketol-acid reductoisomerase (NADP(+)) from Salmonella arizonae (strain ATCC BAA-731 / CDC346-86 / RSK2980).